Consider the following 973-residue polypeptide: Sensor histidine kinase TmoS (973 aa).

One can recognise a PAS 1 domain in the interval 32-103 (REELARIIFD…NQKRLVEAAS (72 aa)). Residues 108–162 (VRCDIEILGKSGGREVIAVDFSLLPIRDEQENIVFLLAEGRNITDKKKAEAMLAL) form the PAC 1 domain. In terms of domain architecture, Histidine kinase 1 spans 187–405 (KVSHELRTPL…LFQVKLPLNA (219 aa)). A Phosphohistidine; by autocatalysis modification is found at histidine 190. The 116-residue stretch at 452 to 567 (RVLIVEDNPD…ELRARVSNLI (116 aa)) folds into the Response regulatory domain. The residue at position 500 (aspartate 500) is a 4-aspartylphosphate. The PAS 2 domain occupies 611-681 (SEARWKAVYE…QRLARLLQSG (71 aa)). The 53-residue stretch at 685–737 (YSVECSYLCKNGSTIWANASVSLMSPRVDEPQVILQIIDDITEKKQAQETLNQ) folds into the PAC 2 domain. A Histidine kinase 2 domain is found at 757 to 973 (YIAHEINQPL…ACFFVSIPVS (217 aa)). Position 760 is a phosphohistidine (histidine 760).

Autophosphorylated. Activation requires a sequential transfer of a phosphate group from a His in the primary transmitter domain, to an Asp in the receiver domain and to a His in the secondary transmitter domain.

The protein resides in the cytoplasm. The catalysed reaction is ATP + protein L-histidine = ADP + protein N-phospho-L-histidine.. Its activity is regulated as follows. Activity is regulated by agonists and antagonists. Binding of agonists such as toluene or benzene to TmoS stimulates autophosphorylation. Toluene causes the most pronounced increase, followed by benzene, chlorobenzene and ethylbenzene. Activity is inhibited by antagonists such as o-xylene, o-chlorotoluene and trimethylbenzene isomers, which bind to TmoS but do not stimulate autophosphorylation. Functionally, member of the two-component regulatory system TmoS/TmoT involved in the regulation of toluene degradation. Probably phosphorylates TmoT via a four-step phosphorelay in response to toluene. Can also be induced by benzene and ethylbenzene. The protein is Sensor histidine kinase TmoS (tmoS) of Ectopseudomonas mendocina (Pseudomonas mendocina).